The sequence spans 314 residues: Homoserine kinase (314 aa).

Residue 95-105 (PHSRGLGSSAA) participates in ATP binding.

This sequence belongs to the GHMP kinase family. Homoserine kinase subfamily.

The protein localises to the cytoplasm. It carries out the reaction L-homoserine + ATP = O-phospho-L-homoserine + ADP + H(+). The protein operates within amino-acid biosynthesis; L-threonine biosynthesis; L-threonine from L-aspartate: step 4/5. Its function is as follows. Catalyzes the ATP-dependent phosphorylation of L-homoserine to L-homoserine phosphate. The polypeptide is Homoserine kinase (Mycobacterium sp. (strain JLS)).